A 154-amino-acid polypeptide reads, in one-letter code: 6,7-dimethyl-8-ribityllumazine synthase (154 aa).

5-amino-6-(D-ribitylamino)uracil is bound by residues Phe-22, 56-58, and 80-82; these read AFE and AVI. A (2S)-2-hydroxy-3-oxobutyl phosphate-binding site is contributed by 85-86; it reads AT. The active-site Proton donor is the His-88. Phe-113 is a 5-amino-6-(D-ribitylamino)uracil binding site. Arg-127 provides a ligand contact to (2S)-2-hydroxy-3-oxobutyl phosphate.

This sequence belongs to the DMRL synthase family.

The catalysed reaction is (2S)-2-hydroxy-3-oxobutyl phosphate + 5-amino-6-(D-ribitylamino)uracil = 6,7-dimethyl-8-(1-D-ribityl)lumazine + phosphate + 2 H2O + H(+). The protein operates within cofactor biosynthesis; riboflavin biosynthesis; riboflavin from 2-hydroxy-3-oxobutyl phosphate and 5-amino-6-(D-ribitylamino)uracil: step 1/2. Functionally, catalyzes the formation of 6,7-dimethyl-8-ribityllumazine by condensation of 5-amino-6-(D-ribitylamino)uracil with 3,4-dihydroxy-2-butanone 4-phosphate. This is the penultimate step in the biosynthesis of riboflavin. In Clostridium botulinum (strain 657 / Type Ba4), this protein is 6,7-dimethyl-8-ribityllumazine synthase.